A 179-amino-acid chain; its full sequence is Large ribosomal subunit protein uL5 (179 aa).

Belongs to the universal ribosomal protein uL5 family. As to quaternary structure, part of the 50S ribosomal subunit; part of the 5S rRNA/L5/L18/L25 subcomplex. Contacts the 5S rRNA and the P site tRNA. Forms a bridge to the 30S subunit in the 70S ribosome.

Functionally, this is one of the proteins that bind and probably mediate the attachment of the 5S RNA into the large ribosomal subunit, where it forms part of the central protuberance. In the 70S ribosome it contacts protein S13 of the 30S subunit (bridge B1b), connecting the 2 subunits; this bridge is implicated in subunit movement. Contacts the P site tRNA; the 5S rRNA and some of its associated proteins might help stabilize positioning of ribosome-bound tRNAs. This Salmonella arizonae (strain ATCC BAA-731 / CDC346-86 / RSK2980) protein is Large ribosomal subunit protein uL5.